The chain runs to 88 residues: Bombyxin B-8 (88 aa).

A signal peptide spans 1 to 18; it reads MKTSVIFVLIVLNLMWSG. Cystine bridges form between Cys-28/Cys-74, Cys-40/Cys-87, and Cys-73/Cys-78. A propeptide spans 47 to 65 (c peptide like); the sequence is GGAQYAPYFWQKAYLGSRG.

Belongs to the insulin family. In terms of assembly, heterodimer of a B chain and an A chain linked by two disulfide bonds.

The protein resides in the secreted. Functionally, brain peptide responsible for activation of prothoracic glands to produce ecdysone in insects. In Bombyx mori (Silk moth), this protein is Bombyxin B-8 (BBXB8).